We begin with the raw amino-acid sequence, 430 residues long: Cortical fragment-lytic enzyme (430 aa).

LysM domains lie at 3-47 (QIVT…ALIV) and 52-96 (NNYY…QLYI). In terms of domain architecture, GH18 spans 104 to 430 (VESIAYLQPS…VENFTITKKG (327 aa)). E219 functions as the Proton donor in the catalytic mechanism.

This sequence belongs to the glycosyl hydrolase 18 family. Chitinase class II subfamily.

It localises to the forespore. N-acetylglucosaminidase involved in cortex peptidoglycan degradation during germination. Cleaves only partially degraded spore peptidoglycans. Recognizes muramic acid delta-lactam residues specific to spore peptidoglycans. In Bacillus anthracis, this protein is Cortical fragment-lytic enzyme.